Here is a 532-residue protein sequence, read N- to C-terminus: 2,3-bisphosphoglycerate-independent phosphoglycerate mutase (532 aa).

Mn(2+)-binding residues include aspartate 15 and serine 65. Serine 65 (phosphoserine intermediate) is an active-site residue. Substrate is bound by residues histidine 126, 156–157 (RD), arginine 188, arginine 194, 258–261 (RPDR), and lysine 331. Residues aspartate 398, histidine 402, aspartate 439, histidine 440, and histidine 457 each coordinate Mn(2+).

This sequence belongs to the BPG-independent phosphoglycerate mutase family. In terms of assembly, monomer. The cofactor is Mn(2+).

It carries out the reaction (2R)-2-phosphoglycerate = (2R)-3-phosphoglycerate. Its pathway is carbohydrate degradation; glycolysis; pyruvate from D-glyceraldehyde 3-phosphate: step 3/5. Catalyzes the interconversion of 2-phosphoglycerate and 3-phosphoglycerate. The sequence is that of 2,3-bisphosphoglycerate-independent phosphoglycerate mutase from Cyanothece sp. (strain PCC 7425 / ATCC 29141).